Consider the following 370-residue polypeptide: 3-dehydroquinate synthase (370 aa).

NAD(+) contacts are provided by residues 112–116, 136–137, Lys149, Lys158, and 176–179; these read GVVGD, TS, and TLRT. Zn(2+)-binding residues include Glu191, His254, and His276.

Belongs to the sugar phosphate cyclases superfamily. Dehydroquinate synthase family. It depends on Co(2+) as a cofactor. Zn(2+) serves as cofactor. NAD(+) is required as a cofactor.

Its subcellular location is the cytoplasm. It catalyses the reaction 7-phospho-2-dehydro-3-deoxy-D-arabino-heptonate = 3-dehydroquinate + phosphate. It functions in the pathway metabolic intermediate biosynthesis; chorismate biosynthesis; chorismate from D-erythrose 4-phosphate and phosphoenolpyruvate: step 2/7. In terms of biological role, catalyzes the conversion of 3-deoxy-D-arabino-heptulosonate 7-phosphate (DAHP) to dehydroquinate (DHQ). The sequence is that of 3-dehydroquinate synthase from Xanthomonas oryzae pv. oryzae (strain MAFF 311018).